The following is a 322-amino-acid chain: Allergen Asp f 4 (322 aa).

An N-terminal signal peptide occupies residues 1 to 20 (MQLKNSMLLLTALAAGSSVA). Low complexity predominate over residues 80-105 (AAAAAASTPEPSSSHSDSSSSSGVSA). Positions 80 to 109 (AAAAAASTPEPSSSHSDSSSSSGVSADWTN) are disordered.

Its subcellular location is the secreted. The chain is Allergen Asp f 4 from Aspergillus fumigatus (strain ATCC MYA-4609 / CBS 101355 / FGSC A1100 / Af293) (Neosartorya fumigata).